Reading from the N-terminus, the 677-residue chain is Transketolase 1 (677 aa).

Histidine 27 serves as a coordination point for substrate. Residues histidine 66 and 114 to 116 (GPL) contribute to the thiamine diphosphate site. Mg(2+) is bound at residue aspartate 155. Thiamine diphosphate-binding residues include glycine 156 and asparagine 185. Asparagine 185 and isoleucine 187 together coordinate Mg(2+). Substrate contacts are provided by histidine 261, arginine 356, and serine 383. Residue histidine 261 participates in thiamine diphosphate binding. Residues glutamate 415 and phenylalanine 442 each contribute to the thiamine diphosphate site. Glutamate 415 serves as the catalytic Proton donor. Substrate is bound by residues histidine 466, aspartate 474, and arginine 525.

This sequence belongs to the transketolase family. As to quaternary structure, homodimer. Mg(2+) is required as a cofactor. Requires Ca(2+) as cofactor. Mn(2+) serves as cofactor. The cofactor is Co(2+). It depends on thiamine diphosphate as a cofactor.

It catalyses the reaction D-sedoheptulose 7-phosphate + D-glyceraldehyde 3-phosphate = aldehydo-D-ribose 5-phosphate + D-xylulose 5-phosphate. Catalyzes the transfer of a two-carbon ketol group from a ketose donor to an aldose acceptor, via a covalent intermediate with the cofactor thiamine pyrophosphate. The sequence is that of Transketolase 1 (TKT1) from Candida albicans (Yeast).